A 777-amino-acid chain; its full sequence is Aminopeptidase P (777 aa).

The signal sequence occupies residues 1 to 17; sequence MQLNFLLFVFIFLMVFH. Position 551 (histidine 551) interacts with substrate. Aspartate 570 and aspartate 581 together coordinate Mn(2+). Position 640 (histidine 640) interacts with substrate. Histidine 644 provides a ligand contact to Mn(2+). Histidine 653 is a binding site for substrate. Residues glutamate 676 and glutamate 690 each coordinate Mn(2+).

The protein belongs to the peptidase M24B family. Homodimer. Requires Mn(2+) as cofactor. Post-translationally, the N-terminus may be proteolytically cleaved to generate a 73-kDa mature form.

The protein localises to the vacuole lumen. The protein resides in the cytoplasm. It catalyses the reaction Release of any N-terminal amino acid, including proline, that is linked to proline, even from a dipeptide or tripeptide.. Partially activated by Co(2+) and Mg(2+) has no effect. Inhibited by 1 mM Zn(2+), Ni(2+), or Cu(2+). Inhibited by apstatin, a non-hydrolysable peptide analog. Functionally, catalyzes the removal of a penultimate prolyl residue from the N-termini of peptides. In the food vacuole, involved in the final step of host hemoglobin catabolism, by cleaving hemoglobin-derived oligopeptides. In the cytoplasm, may be involved in the last steps of the turnover of ubiquitinated proteins. The polypeptide is Aminopeptidase P (Plasmodium falciparum (isolate 3D7)).